The following is a 237-amino-acid chain: C-type lectin domain family 4 member A (237 aa).

The Cytoplasmic portion of the chain corresponds to Met1–Ala48. An ITIM motif motif is present at residues Ile5–Val10. The chain crosses the membrane as a helical; Signal-anchor for type II membrane protein span at residues Ser49–Phe69. Residues Gln70 to Leu237 lie on the Extracellular side of the membrane. 3 disulfides stabilise this stretch: Cys106/Cys117, Cys134/Cys230, and Cys203/Cys222. Positions Phe113–Glu231 constitute a C-type lectin domain. Positions 143, 145, and 149 each coordinate Ca(2+). Residue Asn185 is glycosylated (N-linked (GlcNAc...) asparagine). Residues Glu195, Ser197, and Glu201 each contribute to the Ca(2+) site. Alpha-D-mannopyranose-binding positions include Glu195–Ser197 and Glu201. An N-acetyl-D-glucosamine-binding site is contributed by Asn207–Arg209. Positions 218, 219, and 231 each coordinate Ca(2+).

May interact with PTPN6 via its ITIM motif. As to expression, expressed preferentially in hematopoietic tissues. Expressed in all circulating Ag-presenting cells such as dendritic cells, myeloid cells, monocytes, macrophages, B-cells and epidermal Langerhans cells (at protein level). Expressed in peripheral blood leukocytes, neutrophils, moderate quantities in spleen, lymph node, and bone marrow, and at very low levels in thymus.

The protein resides in the cell membrane. In terms of biological role, C-type lectin receptor that binds carbohydrates mannose and fucose but also weakly interacts with N-acetylglucosamine (GlcNAc) in a Ca(2+)-dependent manner. Involved in regulating immune reactivity. Once triggered by antigen, it is internalized by clathrin-dependent endocytosis and delivers its antigenic cargo into the antigen presentation pathway resulting in cross-priming of CD8(+) T cells. This cross-presentation and cross-priming are enhanced by TLR7 and TLR8 agonists with increased expansion of the CD8(+) T cells, high production of IFNG and TNF with reduced levels of IL4, IL5 and IL13. In plasmacytoid dendritic cells, inhibits TLR9-mediated IFNA and TNF production. May be involved via its ITIM motif (immunoreceptor tyrosine-based inhibitory motifs) in the inhibition of B-cell-receptor-mediated calcium mobilization and protein tyrosine phosphorylation. Functionally, (Microbial infection) Involved in the interaction between HIV-1 virus and dendritic cells. Enhances HIV-1 binding/entry and virus infection. Requires ITIM motif-associated signal transduction pathway involving phosphatases PTPN6 and PTPN11, SYK, Src kinases and MAP kinases. The protein is C-type lectin domain family 4 member A of Homo sapiens (Human).